We begin with the raw amino-acid sequence, 397 residues long: Tyrosine--tRNA ligase (397 aa).

The short motif at 41-50 (PTAPDLHLGH) is the 'HIGH' region element. The short motif at 225–229 (KMSKS) is the 'KMSKS' region element. ATP is bound at residue Lys228. The 57-residue stretch at 340 to 396 (AFLADSGLAGSRGEAKRLIKQGALSLDGEKLDDPNTPLTAGEYVVRLGKKRFLRLIV) folds into the S4 RNA-binding domain.

Belongs to the class-I aminoacyl-tRNA synthetase family. TyrS type 2 subfamily. In terms of assembly, homodimer.

The protein resides in the cytoplasm. It carries out the reaction tRNA(Tyr) + L-tyrosine + ATP = L-tyrosyl-tRNA(Tyr) + AMP + diphosphate + H(+). Catalyzes the attachment of tyrosine to tRNA(Tyr) in a two-step reaction: tyrosine is first activated by ATP to form Tyr-AMP and then transferred to the acceptor end of tRNA(Tyr). In Oleidesulfovibrio alaskensis (strain ATCC BAA-1058 / DSM 17464 / G20) (Desulfovibrio alaskensis), this protein is Tyrosine--tRNA ligase.